A 445-amino-acid polypeptide reads, in one-letter code: Exodeoxyribonuclease 7 large subunit (445 aa).

The protein belongs to the XseA family. Heterooligomer composed of large and small subunits.

It is found in the cytoplasm. It catalyses the reaction Exonucleolytic cleavage in either 5'- to 3'- or 3'- to 5'-direction to yield nucleoside 5'-phosphates.. Its function is as follows. Bidirectionally degrades single-stranded DNA into large acid-insoluble oligonucleotides, which are then degraded further into small acid-soluble oligonucleotides. This Staphylococcus epidermidis (strain ATCC 12228 / FDA PCI 1200) protein is Exodeoxyribonuclease 7 large subunit.